The following is an 86-amino-acid chain: UPF0367 protein NATL1_01981 (86 aa).

It belongs to the UPF0367 family.

The protein is UPF0367 protein NATL1_01981 of Prochlorococcus marinus (strain NATL1A).